Here is a 177-residue protein sequence, read N- to C-terminus: 2-C-methyl-D-erythritol 2,4-cyclodiphosphate synthase (177 aa).

The a divalent metal cation site is built by aspartate 8 and histidine 10. 4-CDP-2-C-methyl-D-erythritol 2-phosphate contacts are provided by residues 8-10 (DVH) and 34-35 (HS). Histidine 42 is an a divalent metal cation binding site. 4-CDP-2-C-methyl-D-erythritol 2-phosphate is bound by residues 56 to 58 (DIG), 61 to 65 (FPDTD), 132 to 135 (TTEE), phenylalanine 139, and arginine 142.

It belongs to the IspF family. In terms of assembly, homotrimer. A divalent metal cation serves as cofactor.

It carries out the reaction 4-CDP-2-C-methyl-D-erythritol 2-phosphate = 2-C-methyl-D-erythritol 2,4-cyclic diphosphate + CMP. The protein operates within isoprenoid biosynthesis; isopentenyl diphosphate biosynthesis via DXP pathway; isopentenyl diphosphate from 1-deoxy-D-xylulose 5-phosphate: step 4/6. Its function is as follows. Involved in the biosynthesis of isopentenyl diphosphate (IPP) and dimethylallyl diphosphate (DMAPP), two major building blocks of isoprenoid compounds. Catalyzes the conversion of 4-diphosphocytidyl-2-C-methyl-D-erythritol 2-phosphate (CDP-ME2P) to 2-C-methyl-D-erythritol 2,4-cyclodiphosphate (ME-CPP) with a corresponding release of cytidine 5-monophosphate (CMP). In Agathobacter rectalis (strain ATCC 33656 / DSM 3377 / JCM 17463 / KCTC 5835 / VPI 0990) (Eubacterium rectale), this protein is 2-C-methyl-D-erythritol 2,4-cyclodiphosphate synthase.